The chain runs to 326 residues: Putative ankyrin repeat protein L25 (326 aa).

ANK repeat units lie at residues 11–40 (RSEY…DLNV), 42–65 (KLFY…NIHV), 66–95 (DDEF…DIHV), 96–125 (NDDA…DIHA), 127–154 (NELV…DIHA), 155–184 (EDDE…NFRA), 185–214 (ENDY…DIHA), 216–244 (DEYA…DIHA), 246–274 (NDYG…NIHA), and 275–304 (KDDY…NIHA).

The chain is Putative ankyrin repeat protein L25 from Acanthamoeba polyphaga mimivirus (APMV).